A 95-amino-acid chain; its full sequence is Large ribosomal subunit protein bL28 (95 aa).

The tract at residues 1–22 (MSRRCELTGKGPMTGNNVSHAN) is disordered.

Belongs to the bacterial ribosomal protein bL28 family.

This chain is Large ribosomal subunit protein bL28, found in Ruegeria pomeroyi (strain ATCC 700808 / DSM 15171 / DSS-3) (Silicibacter pomeroyi).